A 686-amino-acid chain; its full sequence is Putative xyloglucan glycosyltransferase 10 (686 aa).

Helical transmembrane passes span 114–134 (LYAF…VELA) and 160–180 (AAYV…LFLV). Asp-267 is a catalytic residue. Residues Asp-326 and Asp-328 each contribute to the substrate site. Asp-420 is a catalytic residue. 4 helical membrane-spanning segments follow: residues 498–518 (LILP…TMFI), 523–543 (LPDW…ILPA), 640–656 (ELAL…RSLL), and 661–681 (IHFY…LDLI).

Belongs to the glycosyltransferase 2 family. Plant cellulose synthase-like C subfamily.

Its subcellular location is the golgi apparatus membrane. Its function is as follows. Probable beta-1,4-glucan synthase rather involved in the synthesis of the xyloglucan backbone than cellulose. Seems to work simultaneously with xyloglucan 6-xylosyltransferase. Xyloglucan is a noncellulosic polysaccharides of plant cell wall and consists of a glucan backbone substituted by xylose, galactose and fucose. This Oryza sativa subsp. indica (Rice) protein is Putative xyloglucan glycosyltransferase 10 (CSLC10).